The primary structure comprises 176 residues: Nicotinamide-nucleotide adenylyltransferase (176 aa).

Belongs to the archaeal NMN adenylyltransferase family.

The protein localises to the cytoplasm. It carries out the reaction beta-nicotinamide D-ribonucleotide + ATP + H(+) = diphosphate + NAD(+). It participates in cofactor biosynthesis; NAD(+) biosynthesis; NAD(+) from nicotinamide D-ribonucleotide: step 1/1. In Halorubrum lacusprofundi (strain ATCC 49239 / DSM 5036 / JCM 8891 / ACAM 34), this protein is Nicotinamide-nucleotide adenylyltransferase.